Here is a 947-residue protein sequence, read N- to C-terminus: Protocadherin alpha-4 (947 aa).

The signal sequence occupies residues 1-29 (MEFSWGSGQESRRLLLLLLLLSAWEAGNG). Cadherin domains lie at 30–133 (QLHY…PPVF), 134–242 (PATQ…APAF), 243–350 (DRTI…VPDL), 351–455 (EFKS…APAF), 456–565 (AQPE…APAL), and 588–678 (DHVV…APKA). Over 30–697 (QLHYSVSEEA…GPDAALVDVN (668 aa)) the chain is Extracellular. Residues Cys96 and Cys102 are joined by a disulfide bond. N-linked (GlcNAc...) asparagine glycosylation is found at Asn139, Asn257, and Asn265. Asn548 is a glycosylation site (N-linked (GlcNAc...) asparagine). A helical transmembrane segment spans residues 698-718 (VYLIIAICAVSSLLVLTLLLY). The Cytoplasmic segment spans residues 719 to 947 (TALRCSAPPT…GNSTTDNSDQ (229 aa)). PXXP repeat units follow at residues 734–737 (PGKP), 774–777 (PSLP), 796–799 (PRQP), 829–832 (PGGP), 870–873 (PGNP), and 888–891 (PGSP). A 6 X 4 AA repeats of P-X-X-P region spans residues 734–891 (PGKPTLVCSS…PDKFIIPGSP (158 aa)). Positions 738–947 (TLVCSSAVGS…GNSTTDNSDQ (210 aa)) are required for interaction with FYN. Disordered regions lie at residues 754–805 (RRPR…DWRY) and 828–853 (GPGGPDQQWPTVSSATPEPEAGEVSP). The interval 892 to 947 (AIISIRQEPANSQIDKSDFITFGKKEETKKKKKKKKGNKTQEKKEKGNSTTDNSDQ) is disordered. The span at 906-920 (DKSDFITFGKKEETK) shows a compositional bias: basic and acidic residues.

Forms homodimers in trans (molecules expressed by two different cells). Forms promiscuous heterodimers in cis (at the plasma membrane of the same cell) with other protocadherins. Interacts with FYN.

Its subcellular location is the cell membrane. Functionally, calcium-dependent cell-adhesion protein involved in cells self-recognition and non-self discrimination. Thereby, it is involved in the establishment and maintenance of specific neuronal connections in the brain. This is Protocadherin alpha-4 from Pan troglodytes (Chimpanzee).